The sequence spans 282 residues: Inositol oxygenase (282 aa).

Positions 1–25 (MKDPDPSQVYRPDMDPEAAKDKGSF) are disordered. Residues 12 to 24 (PDMDPEAAKDKGS) show a composition bias toward basic and acidic residues. Arginine 26 is a binding site for substrate. Position 30 is a phosphoserine (serine 30). Residue 82-84 (DES) participates in substrate binding. Residues histidine 95, histidine 120, and aspartate 121 each contribute to the Fe cation site. Substrate contacts are provided by residues lysine 124 and 138-139 (GD). Residues histidine 191, histidine 217, and aspartate 250 each contribute to the Fe cation site. Residue 217-218 (HS) participates in substrate binding.

This sequence belongs to the myo-inositol oxygenase family. It depends on Fe cation as a cofactor. Post-translationally, the N-terminus is blocked. As to expression, kidney specific.

It localises to the cytoplasm. It catalyses the reaction myo-inositol + O2 = D-glucuronate + H2O + H(+). The protein operates within polyol metabolism; myo-inositol degradation into D-glucuronate; D-glucuronate from myo-inositol: step 1/1. The protein is Inositol oxygenase (MIOX) of Sus scrofa (Pig).